We begin with the raw amino-acid sequence, 340 residues long: Putative D-lactate dehydrogenase (340 aa).

NAD(+) contacts are provided by residues 153–154 (NI), Asp174, 206–207 (TP), 233–235 (VSR), and Asp259. Arg235 is a catalytic residue. Glu264 is an active-site residue. His296 acts as the Proton donor in catalysis.

Belongs to the D-isomer specific 2-hydroxyacid dehydrogenase family.

The catalysed reaction is (R)-lactate + NAD(+) = pyruvate + NADH + H(+). In Dictyostelium discoideum (Social amoeba), this protein is Putative D-lactate dehydrogenase (ldhA).